A 357-amino-acid polypeptide reads, in one-letter code: DNA integrity scanning protein DisA (357 aa).

Positions 8–146 (VKSMINILQL…GNLRYTLKDI (139 aa)) constitute a DAC domain. Residues G75, L93, and 106 to 110 (MRHRT) each bind ATP.

It belongs to the DisA family. In terms of assembly, homooctamer. Requires Mg(2+) as cofactor.

The enzyme catalyses 2 ATP = 3',3'-c-di-AMP + 2 diphosphate. In terms of biological role, participates in a DNA-damage check-point that is active prior to asymmetric division when DNA is damaged. DisA forms globular foci that rapidly scan along the chromosomes during sporulation, searching for lesions. When a lesion is present, DisA pauses at the lesion site. This triggers a cellular response that culminates in a temporary block in sporulation initiation. Its function is as follows. Also has diadenylate cyclase activity, catalyzing the condensation of 2 ATP molecules into cyclic di-AMP (c-di-AMP). c-di-AMP acts as a signaling molecule that couples DNA integrity with progression of sporulation. The rise in c-di-AMP level generated by DisA while scanning the chromosome, operates as a positive signal that advances sporulation; upon encountering a lesion, the DisA focus arrests at the damaged site and halts c-di-AMP synthesis. The polypeptide is DNA integrity scanning protein DisA (Bacillus cereus (strain G9842)).